A 332-amino-acid polypeptide reads, in one-letter code: Malate dehydrogenase, cytoplasmic (332 aa).

NAD(+) contacts are provided by residues 11 to 17 (GAAGQIA) and aspartate 42. Substrate contacts are provided by arginine 92 and arginine 98. NAD(+) contacts are provided by residues asparagine 105, glutamine 112, and 129-131 (VGN). The substrate site is built by asparagine 131 and arginine 162. The Proton acceptor role is filled by histidine 187.

Belongs to the LDH/MDH superfamily. MDH type 2 family. Homodimer.

It localises to the cytoplasm. The catalysed reaction is (S)-malate + NAD(+) = oxaloacetate + NADH + H(+). Its activity is regulated as follows. By arsenate for both the forward and reverse reactions. In terms of biological role, malate dehydrogenase. Has no activity with NADPH as substrate. Does not show lactate dehydrogenase activity. The sequence is that of Malate dehydrogenase, cytoplasmic from Taenia solium (Pork tapeworm).